A 388-amino-acid chain; its full sequence is 4-hydroxy-3-methylbut-2-en-1-yl diphosphate synthase (flavodoxin) (388 aa).

Residues 1–22 (MTSVNLGMPAAPQPVLSPRRKT) are disordered. [4Fe-4S] cluster is bound by residues cysteine 281, cysteine 284, cysteine 316, and glutamate 323.

The protein belongs to the IspG family. [4Fe-4S] cluster serves as cofactor.

It catalyses the reaction (2E)-4-hydroxy-3-methylbut-2-enyl diphosphate + oxidized [flavodoxin] + H2O + 2 H(+) = 2-C-methyl-D-erythritol 2,4-cyclic diphosphate + reduced [flavodoxin]. It functions in the pathway isoprenoid biosynthesis; isopentenyl diphosphate biosynthesis via DXP pathway; isopentenyl diphosphate from 1-deoxy-D-xylulose 5-phosphate: step 5/6. Functionally, converts 2C-methyl-D-erythritol 2,4-cyclodiphosphate (ME-2,4cPP) into 1-hydroxy-2-methyl-2-(E)-butenyl 4-diphosphate. The sequence is that of 4-hydroxy-3-methylbut-2-en-1-yl diphosphate synthase (flavodoxin) from Kocuria rhizophila (strain ATCC 9341 / DSM 348 / NBRC 103217 / DC2201).